We begin with the raw amino-acid sequence, 571 residues long: Wee1-like protein kinase 1-A (571 aa).

A disordered region spans residues Met1–Lys101. Residues Pro81–Pro98 are compositionally biased toward pro residues. A Protein kinase domain is found at Phe224–Leu494. Residues Ile230 to Val238 and Lys253 contribute to the ATP site. Asp351 functions as the Proton acceptor in the catalytic mechanism. Asn356 and Asp388 together coordinate Mg(2+). A coiled-coil region spans residues Lys500–Phe539.

The protein belongs to the protein kinase superfamily. Ser/Thr protein kinase family. WEE1 subfamily. Zygotically expressed. Expressed in regions of the embryo that are devoid of mitotic cells, such as the involuting mesoderm.

It localises to the nucleus. The enzyme catalyses L-tyrosyl-[protein] + ATP = O-phospho-L-tyrosyl-[protein] + ADP + H(+). In terms of biological role, acts as a zygotic negative regulator of entry into mitosis (G2 to M transition) by protecting the nucleus from cytoplasmically activated cyclin B1-complexed cdk1 before the onset of mitosis by mediating phosphorylation of cdk1 on 'Tyr-15'. Specifically phosphorylates and inactivates cyclin B1-complexed cdk1 reaching a maximum during G2 phase and a minimum as cells enter M phase. Phosphorylation of cyclin B1-cdk1 occurs exclusively on 'Tyr-15' and phosphorylation of monomeric cdk1 does not occur. Involved in convergent extension of the paraxial mesoderm during neurulation by inhibiting the cell cycle. The chain is Wee1-like protein kinase 1-A (wee1-a) from Xenopus laevis (African clawed frog).